The following is a 522-amino-acid chain: Protein nucleotidyltransferase YdiU (522 aa).

Gly-101, Gly-103, Arg-104, Lys-123, Asp-135, Gly-136, Arg-193, and Arg-200 together coordinate ATP. Asp-270 serves as the catalytic Proton acceptor. Mg(2+)-binding residues include Asn-271 and Asp-280. Asp-280 is a binding site for ATP.

It belongs to the SELO family. Mg(2+) serves as cofactor. The cofactor is Mn(2+).

The enzyme catalyses L-seryl-[protein] + ATP = 3-O-(5'-adenylyl)-L-seryl-[protein] + diphosphate. The catalysed reaction is L-threonyl-[protein] + ATP = 3-O-(5'-adenylyl)-L-threonyl-[protein] + diphosphate. It catalyses the reaction L-tyrosyl-[protein] + ATP = O-(5'-adenylyl)-L-tyrosyl-[protein] + diphosphate. It carries out the reaction L-histidyl-[protein] + UTP = N(tele)-(5'-uridylyl)-L-histidyl-[protein] + diphosphate. The enzyme catalyses L-seryl-[protein] + UTP = O-(5'-uridylyl)-L-seryl-[protein] + diphosphate. The catalysed reaction is L-tyrosyl-[protein] + UTP = O-(5'-uridylyl)-L-tyrosyl-[protein] + diphosphate. In terms of biological role, nucleotidyltransferase involved in the post-translational modification of proteins. It can catalyze the addition of adenosine monophosphate (AMP) or uridine monophosphate (UMP) to a protein, resulting in modifications known as AMPylation and UMPylation. The polypeptide is Protein nucleotidyltransferase YdiU (Flavobacterium johnsoniae (strain ATCC 17061 / DSM 2064 / JCM 8514 / BCRC 14874 / CCUG 350202 / NBRC 14942 / NCIMB 11054 / UW101) (Cytophaga johnsonae)).